The following is a 384-amino-acid chain: NADH-quinone oxidoreductase subunit D 2 (384 aa).

This sequence belongs to the complex I 49 kDa subunit family. In terms of assembly, NDH-1 is composed of 14 different subunits. Subunits NuoB, C, D, E, F, and G constitute the peripheral sector of the complex.

The protein localises to the cell membrane. The catalysed reaction is a quinone + NADH + 5 H(+)(in) = a quinol + NAD(+) + 4 H(+)(out). NDH-1 shuttles electrons from NADH, via FMN and iron-sulfur (Fe-S) centers, to quinones in the respiratory chain. The immediate electron acceptor for the enzyme in this species is believed to be a menaquinone. Couples the redox reaction to proton translocation (for every two electrons transferred, four hydrogen ions are translocated across the cytoplasmic membrane), and thus conserves the redox energy in a proton gradient. The polypeptide is NADH-quinone oxidoreductase subunit D 2 (Symbiobacterium thermophilum (strain DSM 24528 / JCM 14929 / IAM 14863 / T)).